The sequence spans 410 residues: Cysteine desulfurase IscS (410 aa).

Pyridoxal 5'-phosphate-binding positions include 80–81 (AT), Asn-160, Gln-188, and 208–210 (SGH). The residue at position 211 (Lys-211) is an N6-(pyridoxal phosphate)lysine. Thr-248 contributes to the pyridoxal 5'-phosphate binding site. Cys-334 serves as the catalytic Cysteine persulfide intermediate. Cys-334 contacts [2Fe-2S] cluster.

This sequence belongs to the class-V pyridoxal-phosphate-dependent aminotransferase family. NifS/IscS subfamily. In terms of assembly, homodimer. Forms a heterotetramer with IscU, interacts with other sulfur acceptors. Requires pyridoxal 5'-phosphate as cofactor.

The protein localises to the cytoplasm. The enzyme catalyses (sulfur carrier)-H + L-cysteine = (sulfur carrier)-SH + L-alanine. Its pathway is cofactor biosynthesis; iron-sulfur cluster biosynthesis. Its function is as follows. Master enzyme that delivers sulfur to a number of partners involved in Fe-S cluster assembly, tRNA modification or cofactor biosynthesis. Catalyzes the removal of elemental sulfur atoms from cysteine to produce alanine. Functions as a sulfur delivery protein for Fe-S cluster synthesis onto IscU, an Fe-S scaffold assembly protein, as well as other S acceptor proteins. This is Cysteine desulfurase IscS from Rickettsia peacockii (strain Rustic).